Consider the following 544-residue polypeptide: Chaperonin GroEL (544 aa).

Residues 29-32, lysine 50, 86-90, glycine 413, 479-481, and aspartate 495 contribute to the ATP site; these read TLGP, DGTTT, and DAA.

This sequence belongs to the chaperonin (HSP60) family. Forms a cylinder of 14 subunits composed of two heptameric rings stacked back-to-back. Interacts with the co-chaperonin GroES.

It localises to the cytoplasm. The catalysed reaction is ATP + H2O + a folded polypeptide = ADP + phosphate + an unfolded polypeptide.. Its function is as follows. Together with its co-chaperonin GroES, plays an essential role in assisting protein folding. The GroEL-GroES system forms a nano-cage that allows encapsulation of the non-native substrate proteins and provides a physical environment optimized to promote and accelerate protein folding. This chain is Chaperonin GroEL, found in Borrelia duttonii (strain Ly).